Consider the following 405-residue polypeptide: Glucose-1-phosphate adenylyltransferase 1 (405 aa).

Residues tyrosine 96, glycine 161, 176-177 (EK), and serine 194 each bind alpha-D-glucose 1-phosphate.

Belongs to the bacterial/plant glucose-1-phosphate adenylyltransferase family. Homotetramer.

It catalyses the reaction alpha-D-glucose 1-phosphate + ATP + H(+) = ADP-alpha-D-glucose + diphosphate. It participates in glycan biosynthesis; glycogen biosynthesis. Its function is as follows. Involved in the biosynthesis of ADP-glucose, a building block required for the elongation reactions to produce glycogen. Catalyzes the reaction between ATP and alpha-D-glucose 1-phosphate (G1P) to produce pyrophosphate and ADP-Glc. This Vibrio vulnificus (strain YJ016) protein is Glucose-1-phosphate adenylyltransferase 1.